We begin with the raw amino-acid sequence, 43 residues long: Hemolysin H3C (43 aa).

Met-1 is modified (N-formylmethionine).

This sequence belongs to the staphylococcal hemolytic protein family.

It is found in the secreted. In terms of biological role, virulence factor. Causes hemolysis of erythrocytes from sheep (HD(50)=2.63 mM), rabbit (HD(50)=2.37 mM), guinea pig (HD(50)=1.98 mM), dog (HD(50)=1.02 mM) and human (HD(50)=2.07 mM). Acts synergistically with beta-hemolysins from S.aureus ATCC 25923. Cytotoxic towards human dermal fibroblasts. This chain is Hemolysin H3C, found in Staphylococcus cohnii subsp. cohnii.